We begin with the raw amino-acid sequence, 127 residues long: Large ribosomal subunit protein bL12 (127 aa).

The protein belongs to the bacterial ribosomal protein bL12 family. As to quaternary structure, homodimer. Part of the ribosomal stalk of the 50S ribosomal subunit. Forms a multimeric L10(L12)X complex, where L10 forms an elongated spine to which 2 to 4 L12 dimers bind in a sequential fashion. Binds GTP-bound translation factors.

Functionally, forms part of the ribosomal stalk which helps the ribosome interact with GTP-bound translation factors. Is thus essential for accurate translation. The chain is Large ribosomal subunit protein bL12 from Nitratiruptor sp. (strain SB155-2).